The following is a 1391-amino-acid chain: DNA-directed RNA polymerase subunit beta (1391 aa).

Belongs to the RNA polymerase beta chain family. The RNAP catalytic core consists of 2 alpha, 1 beta, 1 beta' and 1 omega subunit. When a sigma factor is associated with the core the holoenzyme is formed, which can initiate transcription.

It catalyses the reaction RNA(n) + a ribonucleoside 5'-triphosphate = RNA(n+1) + diphosphate. Functionally, DNA-dependent RNA polymerase catalyzes the transcription of DNA into RNA using the four ribonucleoside triphosphates as substrates. The sequence is that of DNA-directed RNA polymerase subunit beta from Mycoplasma pneumoniae (strain ATCC 29342 / M129 / Subtype 1) (Mycoplasmoides pneumoniae).